The following is a 747-amino-acid chain: NAD-dependent protein deacetylase sirtuin-1 (747 aa).

The tract at residues 1 to 135 (MADEAALALQ…DDEGEEEEEA (135 aa)) is disordered. A2 is modified (N-acetylalanine). An interaction with CLOCK region spans residues 2–139 (ADEAALALQP…EEEEEAAAAA (138 aa)). The interaction with H1-4 stretch occupies residues 2 to 268 (ADEAALALQP…LTGAGVSVSC (267 aa)). Residues S14 and S26 each carry the phosphoserine modification. A Phosphoserine; by MAPK8 modification is found at S27. Residues 32-39 (PLRKRPRR) carry the Nuclear localization signal motif. At S47 the chain carries Phosphoserine; by MAPK8. A compositionally biased stretch (low complexity) spans 61-100 (PAAARGCPGAAAAALWREAEAEAAAAGGEQEAQATAAAGE). A compositionally biased stretch (acidic residues) spans 120–135 (LYDEDDDDEGEEEEEA). The Nuclear export signal signature appears at 138–145 (AAIGYRDN). Residues 143-541 (RDNLLFGDEI…LHVSEDSSSP (399 aa)) are interaction with CCAR2. A phosphoserine mark is found at S159, S162, S172, and S173. The Nuclear localization signal signature appears at 223–230 (IVINILSE). The Deacetylase sirtuin-type domain maps to 236–496 (KRKDINTIED…NELCHRLGGE (261 aa)). Position 238 is an N6-acetyllysine (K238). The segment at 256-259 (IIVL) is required for interaction with the sumoylated form of CCAR2. Residues 261-280 (GAGV…DGIY) and 345-348 (QNID) contribute to the NAD(+) site. H363 (proton acceptor) is an active-site residue. C371 and C374 together coordinate Zn(2+). K377 carries the post-translational modification N6-acetyllysine. C395 and C398 together coordinate Zn(2+). C395 and C398 each carry S-nitrosocysteine. Residues 425–431 (AMKYDKD) carry the Nuclear export signal motif. K430 is subject to N6-acetyllysine. NAD(+) contacts are provided by residues 440–442 (GSS), 465–467 (NRE), and C482. At K513 the chain carries N6-acetyllysine. 2 disordered regions span residues 523 to 549 (YLSE…PPDS) and 562 to 587 (SNDD…TSRN). T530 is subject to Phosphothreonine; by DYRK1A, DYRK3 and MAPK8. S535 bears the Phosphoserine mark. A compositionally biased stretch (polar residues) spans 537 to 549 (DSSSPERTSPPDS). The tract at residues 538–540 (SSS) is phosphorylated at one of three serine residues. The residue at position 544 (T544) is a Phosphothreonine. Position 545 is a phosphoserine (S545). Positions 569–580 (SESKGCMEEKPQ) are enriched in basic and acidic residues. At K610 the chain carries N6-acetyllysine. Phosphoserine; by CaMK2 occurs at positions 659 and 661. A disordered region spans residues 663-726 (DDVLSSSSCG…FGTDGDDQEA (64 aa)). The segment covering 666-677 (LSSSSCGSNSDS) has biased composition (low complexity). The segment covering 687–707 (EPMEDESEIEEFYNGLEDEPD) has biased composition (acidic residues). T719 is modified (phosphothreonine). Phosphoserine is present on S747.

This sequence belongs to the sirtuin family. Class I subfamily. In terms of assembly, interacts with XBP1 isoform 2. Found in a complex with PCAF and MYOD1. Interacts with FOXO1; the interaction deacetylates FOXO1, resulting in its nuclear retention and promotion of its transcriptional activity Component of the eNoSC complex, composed of SIRT1, SUV39H1 and RRP8. Interacts with HES1, HEY2 and PML. Interacts with RPS19BP1/AROS. Interacts with CCAR2 (via N-terminus); the interaction disrupts the interaction between SIRT1 and p53/TP53. Interacts with SETD7; the interaction induces the dissociation of SIRT1 from p53/TP53 and increases p53/TP53 activity. Interacts with MYCN, NR1I2, CREBZF, TSC2, TLE1, FOS, JUN, NR0B2, PPARG, NCOR, IRS1, IRS2 and NMNAT1. Interacts with HNF1A; the interaction occurs under nutrient restriction. Interacts with SUZ12; the interaction mediates the association with the PRC4 histone methylation complex which is specific as an association with PCR2 and PCR3 complex variants is not found. Interacts with BCL6; leads to a epigenetic repression of specific target genes. Interacts with CLOCK, BMAL1 and PER2. Interacts with PPARA; the interaction seems to be modulated by NAD(+) levels. Interacts with NR1H3 and this interaction is inhibited in the presence of CCAR2. Interacts with CHEK2. Interacts with p53/TP53. Exhibits a preferential interaction with sumoylated CCAR2 over its unmodified form. Interacts with PACS2. Interacts with SIRT7. Interacts with PUS7. Interacts with TULP3. Interacts with MORN3; the interaction enhances the ubiquitination of p53/TP53. As to quaternary structure, (Microbial infection) Interacts with HIV-1 Tat. Requires Zn(2+) as cofactor. Methylated on multiple lysine residues; methylation is enhanced after DNA damage and is dispensable for deacetylase activity toward p53/TP53. In terms of processing, phosphorylated. Phosphorylated by STK4/MST1, resulting in inhibition of SIRT1-mediated p53/TP53 deacetylation. Phosphorylation by MAPK8/JNK1 at Ser-27, Ser-47, and Thr-530 leads to increased nuclear localization and enzymatic activity. Phosphorylation at Thr-530 by DYRK1A and DYRK3 activates deacetylase activity and promotes cell survival. Phosphorylation by mammalian target of rapamycin complex 1 (mTORC1) at Ser-47 inhibits deacetylation activity. Phosphorylated by CaMK2, leading to increased p53/TP53 and NF-kappa-B p65/RELA deacetylation activity. Phosphorylation at Ser-27 implicating MAPK9 is linked to protein stability. There is some ambiguity for some phosphosites: Ser-159/Ser-162 and Thr-544/Ser-545. Post-translationally, proteolytically cleaved by cathepsin B upon TNF-alpha treatment to yield catalytic inactive but stable SirtT1 75 kDa fragment (75SirT1). S-nitrosylated by GAPDH, leading to inhibit the NAD-dependent protein deacetylase activity. In terms of processing, acetylated at various Lys residues. Deacetylated via an autocatalytic mechanism. Autodeacetylation at Lys-238 promotes its protein deacetylase activity. Post-translationally, ubiquitinated; leading to degradation. Deubiquitinated by USP22; leading to stabilization. In terms of tissue distribution, widely expressed.

The protein localises to the nucleus. It is found in the PML body. The protein resides in the cytoplasm. It localises to the mitochondrion. The enzyme catalyses N(6)-acetyl-L-lysyl-[protein] + NAD(+) + H2O = 2''-O-acetyl-ADP-D-ribose + nicotinamide + L-lysyl-[protein]. It catalyses the reaction N(6)-propanoyl-L-lysyl-[protein] + NAD(+) + H2O = 3''-O-propanoyl-ADP-D-ribose + nicotinamide + L-lysyl-[protein]. The catalysed reaction is N(6)-(2E)-butenoyl-L-lysyl-[protein] + NAD(+) + H2O = 2''-O-(2E)-but-2-enoyl-ADP-D-ribose + nicotinamide + L-lysyl-[protein]. It carries out the reaction N(6)-[(S)-lactoyl]-L-lysyl-[protein] + NAD(+) + H2O = 2''-O-(S)-lactoyl-ADP-D-ribose + nicotinamide + L-lysyl-[protein]. Its activity is regulated as follows. Inhibited by nicotinamide. Activated by resveratrol (3,5,4'-trihydroxy-trans-stilbene), butein (3,4,2',4'-tetrahydroxychalcone), piceatannol (3,5,3',4'-tetrahydroxy-trans-stilbene), Isoliquiritigenin (4,2',4'-trihydroxychalcone), fisetin (3,7,3',4'-tetrahydroxyflavone) and quercetin (3,5,7,3',4'-pentahydroxyflavone). MAPK8/JNK1 and RPS19BP1/AROS act as positive regulators of deacetylation activity. Negatively regulated by CCAR2. NAD-dependent protein deacetylase that links transcriptional regulation directly to intracellular energetics and participates in the coordination of several separated cellular functions such as cell cycle, response to DNA damage, metabolism, apoptosis and autophagy. Can modulate chromatin function through deacetylation of histones and can promote alterations in the methylation of histones and DNA, leading to transcriptional repression. Deacetylates a broad range of transcription factors and coregulators, thereby regulating target gene expression positively and negatively. Serves as a sensor of the cytosolic ratio of NAD(+)/NADH which is altered by glucose deprivation and metabolic changes associated with caloric restriction. Is essential in skeletal muscle cell differentiation and in response to low nutrients mediates the inhibitory effect on skeletal myoblast differentiation which also involves 5'-AMP-activated protein kinase (AMPK) and nicotinamide phosphoribosyltransferase (NAMPT). Component of the eNoSC (energy-dependent nucleolar silencing) complex, a complex that mediates silencing of rDNA in response to intracellular energy status and acts by recruiting histone-modifying enzymes. The eNoSC complex is able to sense the energy status of cell: upon glucose starvation, elevation of NAD(+)/NADP(+) ratio activates SIRT1, leading to histone H3 deacetylation followed by dimethylation of H3 at 'Lys-9' (H3K9me2) by SUV39H1 and the formation of silent chromatin in the rDNA locus. Deacetylates 'Lys-266' of SUV39H1, leading to its activation. Inhibits skeletal muscle differentiation by deacetylating PCAF and MYOD1. Deacetylates H2A and 'Lys-26' of H1-4. Deacetylates 'Lys-16' of histone H4 (in vitro). Involved in NR0B2/SHP corepression function through chromatin remodeling: Recruited to LRH1 target gene promoters by NR0B2/SHP thereby stimulating histone H3 and H4 deacetylation leading to transcriptional repression. Proposed to contribute to genomic integrity via positive regulation of telomere length; however, reports on localization to pericentromeric heterochromatin are conflicting. Proposed to play a role in constitutive heterochromatin (CH) formation and/or maintenance through regulation of the available pool of nuclear SUV39H1. Upon oxidative/metabolic stress decreases SUV39H1 degradation by inhibiting SUV39H1 polyubiquitination by MDM2. This increase in SUV39H1 levels enhances SUV39H1 turnover in CH, which in turn seems to accelerate renewal of the heterochromatin which correlates with greater genomic integrity during stress response. Deacetylates 'Lys-382' of p53/TP53 and impairs its ability to induce transcription-dependent proapoptotic program and modulate cell senescence. Deacetylates TAF1B and thereby represses rDNA transcription by the RNA polymerase I. Deacetylates MYC, promotes the association of MYC with MAX and decreases MYC stability leading to compromised transformational capability. Deacetylates FOXO3 in response to oxidative stress thereby increasing its ability to induce cell cycle arrest and resistance to oxidative stress but inhibiting FOXO3-mediated induction of apoptosis transcriptional activity; also leading to FOXO3 ubiquitination and protesomal degradation. Appears to have a similar effect on MLLT7/FOXO4 in regulation of transcriptional activity and apoptosis. Deacetylates DNMT1; thereby impairs DNMT1 methyltransferase-independent transcription repressor activity, modulates DNMT1 cell cycle regulatory function and DNMT1-mediated gene silencing. Deacetylates RELA/NF-kappa-B p65 thereby inhibiting its transactivating potential and augments apoptosis in response to TNF-alpha. Deacetylates HIF1A, KAT5/TIP60, RB1 and HIC1. Deacetylates FOXO1 resulting in its nuclear retention and enhancement of its transcriptional activity leading to increased gluconeogenesis in liver. Inhibits E2F1 transcriptional activity and apoptotic function, possibly by deacetylation. Involved in HES1- and HEY2-mediated transcriptional repression. In cooperation with MYCN seems to be involved in transcriptional repression of DUSP6/MAPK3 leading to MYCN stabilization by phosphorylation at 'Ser-62'. Deacetylates MEF2D. Required for antagonist-mediated transcription suppression of AR-dependent genes which may be linked to local deacetylation of histone H3. Represses HNF1A-mediated transcription. Required for the repression of ESRRG by CREBZF. Deacetylates NR1H3 and NR1H2 and deacetylation of NR1H3 at 'Lys-434' positively regulates transcription of NR1H3:RXR target genes, promotes NR1H3 proteasomal degradation and results in cholesterol efflux; a promoter clearing mechanism after reach round of transcription is proposed. Involved in lipid metabolism: deacetylates LPIN1, thereby inhibiting diacylglycerol synthesis. Implicated in regulation of adipogenesis and fat mobilization in white adipocytes by repression of PPARG which probably involves association with NCOR1 and SMRT/NCOR2. Deacetylates p300/EP300 and PRMT1. Deacetylates ACSS2 leading to its activation, and HMGCS1 deacetylation. Involved in liver and muscle metabolism. Through deacetylation and activation of PPARGC1A is required to activate fatty acid oxidation in skeletal muscle under low-glucose conditions and is involved in glucose homeostasis. Involved in regulation of PPARA and fatty acid beta-oxidation in liver. Involved in positive regulation of insulin secretion in pancreatic beta cells in response to glucose; the function seems to imply transcriptional repression of UCP2. Proposed to deacetylate IRS2 thereby facilitating its insulin-induced tyrosine phosphorylation. Deacetylates SREBF1 isoform SREBP-1C thereby decreasing its stability and transactivation in lipogenic gene expression. Involved in DNA damage response by repressing genes which are involved in DNA repair, such as XPC and TP73, deacetylating XRCC6/Ku70, and facilitating recruitment of additional factors to sites of damaged DNA, such as SIRT1-deacetylated NBN can recruit ATM to initiate DNA repair and SIRT1-deacetylated XPA interacts with RPA2. Also involved in DNA repair of DNA double-strand breaks by homologous recombination and specifically single-strand annealing independently of XRCC6/Ku70 and NBN. Promotes DNA double-strand breaks by mediating deacetylation of SIRT6. Transcriptional suppression of XPC probably involves an E2F4:RBL2 suppressor complex and protein kinase B (AKT) signaling. Transcriptional suppression of TP73 probably involves E2F4 and PCAF. Deacetylates WRN thereby regulating its helicase and exonuclease activities and regulates WRN nuclear translocation in response to DNA damage. Deacetylates APEX1 at 'Lys-6' and 'Lys-7' and stimulates cellular AP endonuclease activity by promoting the association of APEX1 to XRCC1. Catalyzes deacetylation of ERCC4/XPF, thereby impairing interaction with ERCC1 and nucleotide excision repair (NER). Increases p53/TP53-mediated transcription-independent apoptosis by blocking nuclear translocation of cytoplasmic p53/TP53 and probably redirecting it to mitochondria. Deacetylates XRCC6/Ku70 at 'Lys-539' and 'Lys-542' causing it to sequester BAX away from mitochondria thereby inhibiting stress-induced apoptosis. Is involved in autophagy, presumably by deacetylating ATG5, ATG7 and MAP1LC3B/ATG8. Deacetylates AKT1 which leads to enhanced binding of AKT1 and PDK1 to PIP3 and promotes their activation. Proposed to play role in regulation of STK11/LBK1-dependent AMPK signaling pathways implicated in cellular senescence which seems to involve the regulation of the acetylation status of STK11/LBK1. Can deacetylate STK11/LBK1 and thereby increase its activity, cytoplasmic localization and association with STRAD; however, the relevance of such activity in normal cells is unclear. In endothelial cells is shown to inhibit STK11/LBK1 activity and to promote its degradation. Deacetylates SMAD7 at 'Lys-64' and 'Lys-70' thereby promoting its degradation. Deacetylates CIITA and augments its MHC class II transactivation and contributes to its stability. Deacetylates MECOM/EVI1. Deacetylates PML at 'Lys-487' and this deacetylation promotes PML control of PER2 nuclear localization. During the neurogenic transition, represses selective NOTCH1-target genes through histone deacetylation in a BCL6-dependent manner and leading to neuronal differentiation. Regulates the circadian expression of several core clock genes, including BMAL1, RORC, PER2 and CRY1 and plays a critical role in maintaining a controlled rhythmicity in histone acetylation, thereby contributing to circadian chromatin remodeling. Deacetylates BMAL1 and histones at the circadian gene promoters in order to facilitate repression by inhibitory components of the circadian oscillator. Deacetylates PER2, facilitating its ubiquitination and degradation by the proteasome. Protects cardiomyocytes against palmitate-induced apoptosis. Deacetylates XBP1 isoform 2; deacetylation decreases protein stability of XBP1 isoform 2 and inhibits its transcriptional activity. Deacetylates PCK1 and directs its activity toward phosphoenolpyruvate production promoting gluconeogenesis. Involved in the CCAR2-mediated regulation of PCK1 and NR1D1. Deacetylates CTNB1 at 'Lys-49'. In POMC (pro-opiomelanocortin) neurons, required for leptin-induced activation of PI3K signaling. Deacetylates SOX9; promoting SOX9 nuclear localization and transactivation activity. Involved in the regulation of centrosome duplication: deacetylates CENATAC in G1 phase, allowing for SASS6 accumulation on the centrosome and subsequent procentriole assembly. Deacetylates NDC80/HEC1. In addition to protein deacetylase activity, also acts as a protein-lysine deacylase by mediating protein delactylation, depropionylation and decrotonylation. Mediates depropionylation of Osterix (SP7). Catalyzes decrotonylation of histones; it however does not represent a major histone decrotonylase. Mediates protein delactylation of TEAD1 and YAP1. Its function is as follows. Deacetylates 'Lys-382' of p53/TP53, however with lower activity than isoform 1. In combination, the two isoforms exert an additive effect. Isoform 2 regulates p53/TP53 expression and cellular stress response and is in turn repressed by p53/TP53 presenting a SIRT1 isoform-dependent auto-regulatory loop. In terms of biological role, catalytically inactive 75SirT1 may be involved in regulation of apoptosis. May be involved in protecting chondrocytes from apoptotic death by associating with cytochrome C and interfering with apoptosome assembly. Functionally, (Microbial infection) In case of HIV-1 infection, interacts with and deacetylates the viral Tat protein. The viral Tat protein inhibits SIRT1 deacetylation activity toward RELA/NF-kappa-B p65, thereby potentiates its transcriptional activity and SIRT1 is proposed to contribute to T-cell hyperactivation during infection. The sequence is that of NAD-dependent protein deacetylase sirtuin-1 from Homo sapiens (Human).